Reading from the N-terminus, the 78-residue chain is Conotoxin TsMSGL-13 (78 aa).

An N-terminal signal peptide occupies residues 1 to 24; the sequence is MSGLGIMVLTLLLFMFMATSHQDA. Positions 25 to 44 are excised as a propeptide; it reads GEKQATQRDAINVRRRRSIT. Intrachain disulfides connect cysteine 51–cysteine 63, cysteine 55–cysteine 72, and cysteine 62–cysteine 76. Phenylalanine 77 is subject to Phenylalanine amide.

This sequence belongs to the conotoxin O3 superfamily. As to expression, expressed by the venom duct.

Its subcellular location is the secreted. The protein is Conotoxin TsMSGL-13 of Conus tessulatus (Tessellate cone).